We begin with the raw amino-acid sequence, 492 residues long: Bifunctional purine biosynthesis protein PurH (492 aa).

The MGS-like domain maps to 1–144 (MKKAILSVSN…KNFKHVTTIV (144 aa)).

Belongs to the PurH family.

The catalysed reaction is (6R)-10-formyltetrahydrofolate + 5-amino-1-(5-phospho-beta-D-ribosyl)imidazole-4-carboxamide = 5-formamido-1-(5-phospho-D-ribosyl)imidazole-4-carboxamide + (6S)-5,6,7,8-tetrahydrofolate. It carries out the reaction IMP + H2O = 5-formamido-1-(5-phospho-D-ribosyl)imidazole-4-carboxamide. It participates in purine metabolism; IMP biosynthesis via de novo pathway; 5-formamido-1-(5-phospho-D-ribosyl)imidazole-4-carboxamide from 5-amino-1-(5-phospho-D-ribosyl)imidazole-4-carboxamide (10-formyl THF route): step 1/1. It functions in the pathway purine metabolism; IMP biosynthesis via de novo pathway; IMP from 5-formamido-1-(5-phospho-D-ribosyl)imidazole-4-carboxamide: step 1/1. The polypeptide is Bifunctional purine biosynthesis protein PurH (Staphylococcus haemolyticus (strain JCSC1435)).